A 412-amino-acid polypeptide reads, in one-letter code: Peptidase T (412 aa).

Residue His-84 participates in Zn(2+) binding. Asp-86 is an active-site residue. Residue Asp-146 participates in Zn(2+) binding. Glu-179 functions as the Proton acceptor in the catalytic mechanism. Glu-180, Asp-202, and His-385 together coordinate Zn(2+).

It belongs to the peptidase M20B family. The cofactor is Zn(2+).

It localises to the cytoplasm. The enzyme catalyses Release of the N-terminal residue from a tripeptide.. Cleaves the N-terminal amino acid of tripeptides. The chain is Peptidase T from Haemophilus influenzae (strain PittEE).